A 364-amino-acid polypeptide reads, in one-letter code: 4-hydroxythreonine-4-phosphate dehydrogenase (364 aa).

2 residues coordinate substrate: His148 and Thr149. Residues His177, His216, and His301 each contribute to the a divalent metal cation site. Substrate is bound by residues Lys309, Asn318, and Arg327.

The protein belongs to the PdxA family. Homodimer. Zn(2+) is required as a cofactor. It depends on Mg(2+) as a cofactor. Requires Co(2+) as cofactor.

It localises to the cytoplasm. The catalysed reaction is 4-(phosphooxy)-L-threonine + NAD(+) = 3-amino-2-oxopropyl phosphate + CO2 + NADH. Its pathway is cofactor biosynthesis; pyridoxine 5'-phosphate biosynthesis; pyridoxine 5'-phosphate from D-erythrose 4-phosphate: step 4/5. Its function is as follows. Catalyzes the NAD(P)-dependent oxidation of 4-(phosphooxy)-L-threonine (HTP) into 2-amino-3-oxo-4-(phosphooxy)butyric acid which spontaneously decarboxylates to form 3-amino-2-oxopropyl phosphate (AHAP). This is 4-hydroxythreonine-4-phosphate dehydrogenase from Campylobacter jejuni (strain RM1221).